We begin with the raw amino-acid sequence, 332 residues long: 2,3-diketo-L-gulonate reductase (332 aa).

His44 (proton donor) is an active-site residue. Residues 168–174, 224–225, and 304–306 contribute to the NAD(+) site; these read ITMVDMS, WK, and GHE.

The protein belongs to the LDH2/MDH2 oxidoreductase family. DlgD subfamily. In terms of assembly, homodimer.

The protein localises to the cytoplasm. It carries out the reaction 3-dehydro-L-gulonate + NAD(+) = 2,3-dioxo-L-gulonate + NADH + H(+). The catalysed reaction is 3-dehydro-L-gulonate + NADP(+) = 2,3-dioxo-L-gulonate + NADPH + H(+). Catalyzes the reduction of 2,3-diketo-L-gulonate in the presence of NADH, to form 3-keto-L-gulonate. The protein is 2,3-diketo-L-gulonate reductase of Klebsiella oxytoca.